Here is a 236-residue protein sequence, read N- to C-terminus: Rho-related GTP-binding protein RhoV (236 aa).

Residues 1 to 27 (MPPRELSEAEPPPLPASTPPPRRRSAP) form a disordered region. A compositionally biased stretch (pro residues) spans 10 to 20 (EPPPLPASTPP). Residue serine 25 is modified to Phosphoserine. GTP contacts are provided by residues 38–45 (GDGAVGKS), 85–89 (DTAGQ), and 143–146 (TQAD). Cysteine 234 carries S-palmitoyl cysteine lipidation.

This sequence belongs to the small GTPase superfamily. Rho family. As to quaternary structure, interacts with PAK2. Mg(2+) is required as a cofactor.

The protein resides in the cell membrane. It is found in the endosome membrane. Its function is as follows. Plays a role in the control of the actin cytoskeleton via activation of the JNK pathway. The chain is Rho-related GTP-binding protein RhoV from Mus musculus (Mouse).